Consider the following 361-residue polypeptide: MLLELARWLQQLESLFGLFNYLTFRGILAALTALFLSLWMGPAVIRKLAQFKGGQPIRQDGPQTHFSKAGTPTMGGSLILLTVTLSVLLWGDLRNRYVWLVLAVMICFGAIGWYDDWIKIVRRDPNGLKSRWKYLLQSIFGLAAGLFLYYTADVPAAITFYIPMFKAIALPLAGVSFVVIAYFWIVGFSNAVNLTDGLDGLAIMPTVLVACALGVFAYASGNVVFAEYLKIPLIPGAGELIIICSAIAGAGLGFLWFNTYPAMVFMGDIGALSLGAVLGTVAVIVRQELVLVIMGGVFVIETLSVMIQVASFKLTGKRVFRMAPIHHHFELKGWPEPRVIVRFWIISVVLVLIGLATLKVR.

10 helical membrane passes run 25 to 45, 73 to 93, 98 to 118, 139 to 159, 168 to 188, 200 to 220, 237 to 257, 264 to 284, 289 to 309, and 339 to 359; these read RGIL…PAVI, TMGG…WGDL, VWLV…DDWI, IFGL…AAIT, IALP…IVGF, GLAI…AYAS, AGEL…FLWF, VFMG…VAVI, LVLV…MIQV, and VIVR…ATLK.

It belongs to the glycosyltransferase 4 family. MraY subfamily. The cofactor is Mg(2+).

The protein resides in the cell inner membrane. The catalysed reaction is UDP-N-acetyl-alpha-D-muramoyl-L-alanyl-gamma-D-glutamyl-meso-2,6-diaminopimeloyl-D-alanyl-D-alanine + di-trans,octa-cis-undecaprenyl phosphate = di-trans,octa-cis-undecaprenyl diphospho-N-acetyl-alpha-D-muramoyl-L-alanyl-D-glutamyl-meso-2,6-diaminopimeloyl-D-alanyl-D-alanine + UMP. It functions in the pathway cell wall biogenesis; peptidoglycan biosynthesis. Catalyzes the initial step of the lipid cycle reactions in the biosynthesis of the cell wall peptidoglycan: transfers peptidoglycan precursor phospho-MurNAc-pentapeptide from UDP-MurNAc-pentapeptide onto the lipid carrier undecaprenyl phosphate, yielding undecaprenyl-pyrophosphoryl-MurNAc-pentapeptide, known as lipid I. The chain is Phospho-N-acetylmuramoyl-pentapeptide-transferase from Xanthomonas campestris pv. campestris (strain 8004).